A 408-amino-acid chain; its full sequence is tRNA wybutosine-synthesizing protein 2 homolog (408 aa).

S-adenosyl-L-methionine contacts are provided by residues Ser201, Lys208, Glu248, and 276–277 (DN).

The protein belongs to the class I-like SAM-binding methyltransferase superfamily. TRM5/TYW2 family.

It carries out the reaction 4-demethylwyosine(37) in tRNA(Phe) + S-adenosyl-L-methionine = 4-demethyl-7-[(3S)-3-amino-3-carboxypropyl]wyosine(37) in tRNA(Phe) + S-methyl-5'-thioadenosine + H(+). It functions in the pathway tRNA modification; wybutosine-tRNA(Phe) biosynthesis. Functionally, S-adenosyl-L-methionine-dependent transferase that acts as a component of the wybutosine biosynthesis pathway. Wybutosine is a hyper modified guanosine with a tricyclic base found at the 3'-position adjacent to the anticodon of eukaryotic phenylalanine tRNA. Catalyzes the transfer of the alpha-amino-alpha-carboxypropyl (acp) group from S-adenosyl-L-methionine to the C-7 position of 4-demethylwyosine (imG-14) to produce wybutosine-86. The chain is tRNA wybutosine-synthesizing protein 2 homolog (trmt12) from Danio rerio (Zebrafish).